Reading from the N-terminus, the 166-residue chain is Peptide deformylase (166 aa).

The Fe cation site is built by cysteine 88 and histidine 130. The active site involves glutamate 131. Histidine 134 lines the Fe cation pocket.

It belongs to the polypeptide deformylase family. It depends on Fe(2+) as a cofactor.

The enzyme catalyses N-terminal N-formyl-L-methionyl-[peptide] + H2O = N-terminal L-methionyl-[peptide] + formate. Functionally, removes the formyl group from the N-terminal Met of newly synthesized proteins. Requires at least a dipeptide for an efficient rate of reaction. N-terminal L-methionine is a prerequisite for activity but the enzyme has broad specificity at other positions. The sequence is that of Peptide deformylase from Thermoanaerobacter sp. (strain X514).